The chain runs to 341 residues: Uroporphyrinogen decarboxylase (341 aa).

Substrate is bound by residues 23–27, aspartate 73, tyrosine 148, serine 203, and histidine 318; that span reads RQAGR.

Belongs to the uroporphyrinogen decarboxylase family. As to quaternary structure, homodimer.

Its subcellular location is the cytoplasm. It carries out the reaction uroporphyrinogen III + 4 H(+) = coproporphyrinogen III + 4 CO2. Its pathway is porphyrin-containing compound metabolism; protoporphyrin-IX biosynthesis; coproporphyrinogen-III from 5-aminolevulinate: step 4/4. In terms of biological role, catalyzes the decarboxylation of four acetate groups of uroporphyrinogen-III to yield coproporphyrinogen-III. This Brucella suis (strain ATCC 23445 / NCTC 10510) protein is Uroporphyrinogen decarboxylase.